Consider the following 232-residue polypeptide: Orotidine 5'-phosphate decarboxylase (232 aa).

Residues D16, K38, 65-74, T119, R180, Q189, G209, and R210 contribute to the substrate site; that span reads DLKLHDIGNT. K67 acts as the Proton donor in catalysis.

This sequence belongs to the OMP decarboxylase family. Type 1 subfamily. In terms of assembly, homodimer.

The enzyme catalyses orotidine 5'-phosphate + H(+) = UMP + CO2. The protein operates within pyrimidine metabolism; UMP biosynthesis via de novo pathway; UMP from orotate: step 2/2. In terms of biological role, catalyzes the decarboxylation of orotidine 5'-monophosphate (OMP) to uridine 5'-monophosphate (UMP). The protein is Orotidine 5'-phosphate decarboxylase of Methylorubrum extorquens (strain PA1) (Methylobacterium extorquens).